Here is a 192-residue protein sequence, read N- to C-terminus: Small ribosomal subunit protein eS7 (192 aa).

It belongs to the eukaryotic ribosomal protein eS7 family.

The sequence is that of Small ribosomal subunit protein eS7 (RpS7) from Anopheles gambiae (African malaria mosquito).